The following is a 1014-amino-acid chain: Exportin-T (1014 aa).

The protein belongs to the exportin family.

It is found in the nucleus. Its subcellular location is the cytoplasm. Its function is as follows. tRNA nucleus export receptor which facilitates tRNA translocation across the nuclear pore complex. Involved in pre-tRNA splicing, probably by affecting the interaction of pre-tRNA with splicing endonuclease. This chain is Exportin-T (LOS1), found in Podospora anserina (strain S / ATCC MYA-4624 / DSM 980 / FGSC 10383) (Pleurage anserina).